Reading from the N-terminus, the 56-residue chain is Male determiner protein Yob (56 aa).

Functionally, male determiner protein (M-factor) that controls male somatic sexual differentiation. Acts as a dominant factor that regulates the mRNA splicing of doublesex (dsx) transcripts and promotes expression of male splice forms of dsx. In Anopheles gambiae (African malaria mosquito), this protein is Male determiner protein Yob.